The following is a 121-amino-acid chain: Immunoglobulin kappa variable 2-40 (121 aa).

The signal sequence occupies residues 1-19; that stretch reads MRLPAQLLGLLMLWVPGSS. The 102-residue stretch at 20-121 folds into the Ig-like domain; the sequence is EDIVMTQTPL…YYCMQRIEFP (102 aa). Positions 21–43 are framework-1; that stretch reads DIVMTQTPLSLPVTPGEPASISC. Residues C43 and C114 are joined by a disulfide bond. The complementarity-determining-1 stretch occupies residues 44 to 60; it reads RSSQSLLDSDDGNTYLD. The segment at 61 to 75 is framework-2; it reads WYLQKPGQSPQLLIY. The segment at 76–82 is complementarity-determining-2; the sequence is TLSYRAS. A framework-3 region spans residues 83–114; the sequence is GVPDRFSGSGSGTDFTLKISRVEAEDVGVYYC. The segment at 115–121 is complementarity-determining-3; sequence MQRIEFP.

Immunoglobulins are composed of two identical heavy chains and two identical light chains; disulfide-linked.

It is found in the secreted. Its subcellular location is the cell membrane. Functionally, v region of the variable domain of immunoglobulin light chains that participates in the antigen recognition. Immunoglobulins, also known as antibodies, are membrane-bound or secreted glycoproteins produced by B lymphocytes. In the recognition phase of humoral immunity, the membrane-bound immunoglobulins serve as receptors which, upon binding of a specific antigen, trigger the clonal expansion and differentiation of B lymphocytes into immunoglobulins-secreting plasma cells. Secreted immunoglobulins mediate the effector phase of humoral immunity, which results in the elimination of bound antigens. The antigen binding site is formed by the variable domain of one heavy chain, together with that of its associated light chain. Thus, each immunoglobulin has two antigen binding sites with remarkable affinity for a particular antigen. The variable domains are assembled by a process called V-(D)-J rearrangement and can then be subjected to somatic hypermutations which, after exposure to antigen and selection, allow affinity maturation for a particular antigen. The chain is Immunoglobulin kappa variable 2-40 from Homo sapiens (Human).